The following is a 70-amino-acid chain: Sec-independent protein translocase protein TatA (70 aa).

The helical transmembrane segment at methionine 1 to glycine 21 threads the bilayer. The interval aspartate 46–serine 70 is disordered.

This sequence belongs to the TatA/E family. In terms of assembly, the Tat system comprises two distinct complexes: a TatABC complex, containing multiple copies of TatA, TatB and TatC subunits, and a separate TatA complex, containing only TatA subunits. Substrates initially bind to the TatABC complex, which probably triggers association of the separate TatA complex to form the active translocon.

It localises to the cell inner membrane. Part of the twin-arginine translocation (Tat) system that transports large folded proteins containing a characteristic twin-arginine motif in their signal peptide across membranes. TatA could form the protein-conducting channel of the Tat system. This chain is Sec-independent protein translocase protein TatA, found in Thiobacillus denitrificans (strain ATCC 25259 / T1).